The primary structure comprises 509 residues: Maturase K (509 aa).

This sequence belongs to the intron maturase 2 family. MatK subfamily.

Its subcellular location is the plastid. It is found in the chloroplast. Usually encoded in the trnK tRNA gene intron. Probably assists in splicing its own and other chloroplast group II introns. This is Maturase K from Amentotaxus argotaenia (Chinese flowering yew).